We begin with the raw amino-acid sequence, 573 residues long: Sulfite reductase [NADPH] hemoprotein beta-component (573 aa).

Residues 1–20 form a disordered region; that stretch reads MAKVELKAPDGPPSDVERIK. Residues C438, C444, C483, and C487 each coordinate [4Fe-4S] cluster. Position 487 (C487) interacts with siroheme.

The protein belongs to the nitrite and sulfite reductase 4Fe-4S domain family. Alpha(8)-beta(8). The alpha component is a flavoprotein, the beta component is a hemoprotein. The cofactor is siroheme. It depends on [4Fe-4S] cluster as a cofactor.

The catalysed reaction is hydrogen sulfide + 3 NADP(+) + 3 H2O = sulfite + 3 NADPH + 4 H(+). It functions in the pathway sulfur metabolism; hydrogen sulfide biosynthesis; hydrogen sulfide from sulfite (NADPH route): step 1/1. Component of the sulfite reductase complex that catalyzes the 6-electron reduction of sulfite to sulfide. This is one of several activities required for the biosynthesis of L-cysteine from sulfate. This is Sulfite reductase [NADPH] hemoprotein beta-component from Geobacillus kaustophilus (strain HTA426).